Here is a 225-residue protein sequence, read N- to C-terminus: Orotate phosphoribosyltransferase (225 aa).

Lys31 is a binding site for 5-phospho-alpha-D-ribose 1-diphosphate. 39–40 (FF) is a binding site for orotate. 5-phospho-alpha-D-ribose 1-diphosphate contacts are provided by residues 78–79 (YK), Arg105, Lys106, Lys109, His111, and 130–138 (DDVLTSGKA). Orotate contacts are provided by Thr134 and Arg163.

This sequence belongs to the purine/pyrimidine phosphoribosyltransferase family. PyrE subfamily. Homodimer.

It carries out the reaction orotidine 5'-phosphate + diphosphate = orotate + 5-phospho-alpha-D-ribose 1-diphosphate. The protein operates within pyrimidine metabolism; UMP biosynthesis via de novo pathway; UMP from orotate: step 1/2. In terms of biological role, catalyzes the transfer of a ribosyl phosphate group from 5-phosphoribose 1-diphosphate to orotate, leading to the formation of orotidine monophosphate (OMP). The chain is Orotate phosphoribosyltransferase (URA5) from Cryptococcus neoformans var. grubii serotype A (strain H99 / ATCC 208821 / CBS 10515 / FGSC 9487) (Filobasidiella neoformans var. grubii).